Reading from the N-terminus, the 143-residue chain is Periplasmic nitrate reductase, electron transfer subunit (143 aa).

A signal peptide spans 1 to 22 (MKKILTLAAIVLAIGGCSGQQA). Residues His72, Cys85, Cys88, His89, His106, Cys121, Cys124, and His125 each coordinate heme c.

This sequence belongs to the NapB family. In terms of assembly, component of the periplasmic nitrate reductase NapAB complex composed of NapA and NapB. Binds 2 heme C groups per subunit.

It is found in the periplasm. In terms of biological role, electron transfer subunit of the periplasmic nitrate reductase complex NapAB. Receives electrons from the membrane-anchored tetraheme c-type CymA protein and transfers these to NapA subunit, thus allowing electron flow between membrane and periplasm. Not essential for nitrate reduction but confers advantage to the organism when grown on nitrate and thereby a fitness gain in utilizing nitrate. The protein is Periplasmic nitrate reductase, electron transfer subunit of Shewanella oneidensis (strain ATCC 700550 / JCM 31522 / CIP 106686 / LMG 19005 / NCIMB 14063 / MR-1).